The following is a 514-amino-acid chain: 2,3-bisphosphoglycerate-independent phosphoglycerate mutase (514 aa).

Positions 14 and 64 each coordinate Mn(2+). The active-site Phosphoserine intermediate is serine 64. Substrate-binding positions include histidine 125, 155–156, arginine 187, arginine 193, 263–266, and lysine 336; these read RD and RADR. Mn(2+)-binding residues include aspartate 403, histidine 407, aspartate 444, histidine 445, and histidine 463.

The protein belongs to the BPG-independent phosphoglycerate mutase family. As to quaternary structure, monomer. Requires Mn(2+) as cofactor.

The enzyme catalyses (2R)-2-phosphoglycerate = (2R)-3-phosphoglycerate. Its pathway is carbohydrate degradation; glycolysis; pyruvate from D-glyceraldehyde 3-phosphate: step 3/5. Catalyzes the interconversion of 2-phosphoglycerate and 3-phosphoglycerate. This is 2,3-bisphosphoglycerate-independent phosphoglycerate mutase from Salmonella typhi.